Here is a 366-residue protein sequence, read N- to C-terminus: Glycerol-3-phosphate dehydrogenase [NAD(+)], glycosomal (366 aa).

NAD(+) contacts are provided by residues 22-27, F97, K125, and A157; that span reads GSGAFG. K125 contributes to the substrate binding site. K210 serves as the catalytic Proton acceptor. 3 residues coordinate NAD(+): R274, V298, and E300. 274–275 contributes to the substrate binding site; it reads RN. The Microbody targeting signal motif lies at 364-366; it reads SKL.

This sequence belongs to the NAD-dependent glycerol-3-phosphate dehydrogenase family. In terms of assembly, homodimer.

Its subcellular location is the glycosome. The enzyme catalyses sn-glycerol 3-phosphate + NAD(+) = dihydroxyacetone phosphate + NADH + H(+). The sequence is that of Glycerol-3-phosphate dehydrogenase [NAD(+)], glycosomal (GPD) from Leishmania mexicana.